The chain runs to 319 residues: Putative protein phosphatase 2C 23 (319 aa).

Positions Ala73–Ile314 constitute a PPM-type phosphatase domain. 3 residues coordinate Mn(2+): Gly102, Asp235, and Asp305.

This sequence belongs to the PP2C family. It depends on Mg(2+) as a cofactor.

The enzyme catalyses O-phospho-L-seryl-[protein] + H2O = L-seryl-[protein] + phosphate. It catalyses the reaction O-phospho-L-threonyl-[protein] + H2O = L-threonyl-[protein] + phosphate. The protein is Putative protein phosphatase 2C 23 of Oryza sativa subsp. japonica (Rice).